Here is a 663-residue protein sequence, read N- to C-terminus: Protein pat-12 (663 aa).

Over residues 1–15 (MTSHIATETSVNRWS) the composition is skewed to polar residues. 4 disordered regions span residues 1-78 (MTSH…SGDY), 367-430 (RFEE…GQET), 517-546 (FRRGSQQQVSPFVEFPPTLPRRGGGGDYRR), and 597-663 (PMPA…RRRR). Over residues 367 to 380 (RFEETRRTEEVERR) the composition is skewed to basic and acidic residues. The span at 381–400 (VQRREKKERRSRHHSSSRHH) shows a compositional bias: basic residues. Residues 517-526 (FRRGSQQQVS) are compositionally biased toward polar residues. 2 stretches are compositionally biased toward basic and acidic residues: residues 620-640 (FNKERHANSGRRSGRDGKPVD) and 649-663 (NYKREQTLNDDRRRR).

In terms of assembly, interacts with vab-10 (via plankin domain). Isoform a: Expressed in the uterus, the vulva, the rectum, mechanosensory neurons and in head and tail neurons. Isoform e: Expressed in spermatheca and weakly in the vulva. Isoform f: Expressed in spermatheca and weakly in the vulva. Isoform i: Expressed in spermatheca and weakly in the vulva.

Its subcellular location is the apical cell membrane. It localises to the basal cell membrane. It is found in the cytoplasm. The protein localises to the cell junction. The protein resides in the hemidesmosome. Its subcellular location is the cell membrane. It localises to the cytoskeleton. In terms of biological role, required for embryonic morphology and development. Plays both a functional and a structural role in the maintenance and probably biogenesis of fibrous organelles, a hemidesomosome-like junction structure, which ensures muscle stability and muscle connection to the external cuticle. This Caenorhabditis elegans protein is Protein pat-12.